The following is a 103-amino-acid chain: Large ribosomal subunit protein eL14 (103 aa).

It belongs to the eukaryotic ribosomal protein eL14 family.

This chain is Large ribosomal subunit protein eL14, found in Pyrobaculum calidifontis (strain DSM 21063 / JCM 11548 / VA1).